Reading from the N-terminus, the 391-residue chain is Superoxide dismutase [Fe] 1, chloroplastic (391 aa).

The N-terminal 73 residues, methionine 1–glutamine 73, are a transit peptide targeting the chloroplast. Residues valine 87–alanine 119 show a composition bias toward acidic residues. The interval valine 87–serine 120 is disordered. Fe cation contacts are provided by histidine 148, histidine 202, aspartate 301, and histidine 305. The interval methionine 370–valine 391 is disordered. Polar residues predominate over residues glutamine 381–valine 391.

Belongs to the iron/manganese superoxide dismutase family. Homodimer. Requires Fe cation as cofactor.

The protein localises to the plastid. It localises to the chloroplast. It catalyses the reaction 2 superoxide + 2 H(+) = H2O2 + O2. Destroys superoxide anion radicals which are normally produced within the cells and which are toxic to biological systems. This chain is Superoxide dismutase [Fe] 1, chloroplastic, found in Oryza sativa subsp. japonica (Rice).